We begin with the raw amino-acid sequence, 436 residues long: UPF0597 protein YhaM (436 aa).

It belongs to the UPF0597 family.

The protein is UPF0597 protein YhaM of Salmonella paratyphi A (strain ATCC 9150 / SARB42).